Consider the following 287-residue polypeptide: Energy-coupling factor transporter ATP-binding protein EcfA1 (287 aa).

Residues 6 to 248 form the ABC transporter domain; the sequence is IVAEGVSYAY…ADRIRALRLD (243 aa). Residue 47-54 coordinates ATP; sequence GMNGSGKS.

Belongs to the ABC transporter superfamily. Energy-coupling factor EcfA family. Forms a stable energy-coupling factor (ECF) transporter complex composed of 2 membrane-embedded substrate-binding proteins (S component), 2 ATP-binding proteins (A component) and 2 transmembrane proteins (T component).

It localises to the cell membrane. Functionally, ATP-binding (A) component of a common energy-coupling factor (ECF) ABC-transporter complex. Unlike classic ABC transporters this ECF transporter provides the energy necessary to transport a number of different substrates. This Symbiobacterium thermophilum (strain DSM 24528 / JCM 14929 / IAM 14863 / T) protein is Energy-coupling factor transporter ATP-binding protein EcfA1.